The sequence spans 440 residues: Beta-1,3-galactosyl-O-glycosyl-glycoprotein beta-1,6-N-acetylglucosaminyltransferase (440 aa).

The Cytoplasmic portion of the chain corresponds to 1-9 (MKMAGWKKK). A helical; Signal-anchor for type II membrane protein membrane pass occupies residues 10–30 (LCPGHHLWALGCYMLLAVVSL). Topologically, residues 31–440 (RLSLRFKCDV…RHKAIYGTEL (410 aa)) are lumenal. 2 N-linked (GlcNAc...) asparagine; by host glycosylation sites follow: asparagine 72 and asparagine 108. 4 disulfide bridges follow: cysteine 73–cysteine 230, cysteine 164–cysteine 384, cysteine 185–cysteine 212, and cysteine 393–cysteine 425.

The protein belongs to the glycosyltransferase 14 family.

It localises to the host Golgi apparatus membrane. The enzyme catalyses a 3-O-[beta-D-galactosyl-(1-&gt;3)-N-acetyl-alpha-D-galactosaminyl]-L-seryl-[protein] + UDP-N-acetyl-alpha-D-glucosamine = 3-O-{beta-D-galactosyl-(1-&gt;3)-[N-acetyl-beta-D-glucosaminyl-(1-&gt;6)]-N-acetyl-alpha-D-galactosaminyl}-L-seryl-[protein] + UDP + H(+). The catalysed reaction is a 3-O-[beta-D-galactosyl-(1-&gt;3)-N-acetyl-alpha-D-galactosaminyl]-L-threonyl-[protein] + UDP-N-acetyl-alpha-D-glucosamine = a 3-O-{beta-D-galactosyl-(1-&gt;3)-[N-acetyl-beta-D-glucosaminyl-(1-&gt;6)]-N-acetyl-alpha-D-galactosaminyl}-L-threonyl-[protein] + UDP + H(+). It carries out the reaction a beta-D-Gal-(1-&gt;4)-beta-D-GlcNAc-(1-&gt;3)-beta-D-Gal-(1-&gt;4)-beta-D-GlcNAc derivative + UDP-N-acetyl-alpha-D-glucosamine = a beta-D-Gal-(1-&gt;4)-beta-D-GlcNAc-(1-&gt;3)-[beta-D-GlcNAc-(1-&gt;6)]-beta-D-Gal-(1-&gt;4)-N-acetyl-beta-D-glucosaminyl derivative + UDP + H(+). It catalyses the reaction 3-O-[N-acetyl-beta-D-glucosaminyl-(1-&gt;3)-N-acetyl-alpha-D-galactosaminyl]-L-seryl-[protein] + UDP-N-acetyl-alpha-D-glucosamine = 3-O-[N-acetyl-beta-D-glucosaminyl-(1-&gt;3)-[N-acetyl-beta-D-glucosaminyl-(1-&gt;6)]-N-acetyl-alpha-D-galactosaminyl]-L-seryl-[protein] + UDP + H(+). The enzyme catalyses a 3-O-[N-acetyl-beta-D-glucosaminyl-(1-&gt;3)-N-acetyl-alpha-D-galactosaminyl]-L-threonyl-[protein] + UDP-N-acetyl-alpha-D-glucosamine = 3-O-[N-acetyl-beta-D-glucosaminyl-(1-&gt;3)-[N-acetyl-beta-D-glucosaminyl-(1-&gt;6)]-N-acetyl-alpha-D-galactosaminyl]-L-threonyl-[protein] + UDP + H(+). Its pathway is protein modification; protein glycosylation. Non-essential glycosyltransferase that can synthesize all known mucin beta 6 N-acetylglucosaminides. Mediates core 2 and core 4 O-glycan branching, 2 important steps in mucin-type biosynthesis. Has also I-branching enzyme activity by converting linear into branched poly-N-acetyllactosaminoglycans. Contributes to the post-translational modifications of structural proteins. In Bovine herpesvirus 4 (strain V. test) (BoHV-4), this protein is Beta-1,3-galactosyl-O-glycosyl-glycoprotein beta-1,6-N-acetylglucosaminyltransferase (Bo17).